Reading from the N-terminus, the 326-residue chain is 4-hydroxy-3-methylbut-2-enyl diphosphate reductase (326 aa).

Cys22 serves as a coordination point for [4Fe-4S] cluster. Residues His51 and His84 each contribute to the (2E)-4-hydroxy-3-methylbut-2-enyl diphosphate site. Residues His51 and His84 each contribute to the dimethylallyl diphosphate site. Isopentenyl diphosphate contacts are provided by His51 and His84. Cys106 is a binding site for [4Fe-4S] cluster. His134 serves as a coordination point for (2E)-4-hydroxy-3-methylbut-2-enyl diphosphate. His134 contributes to the dimethylallyl diphosphate binding site. His134 is an isopentenyl diphosphate binding site. Glu136 serves as the catalytic Proton donor. Residue Thr174 coordinates (2E)-4-hydroxy-3-methylbut-2-enyl diphosphate. Cys204 contributes to the [4Fe-4S] cluster binding site. (2E)-4-hydroxy-3-methylbut-2-enyl diphosphate is bound by residues Ser232, Ser233, Asn234, and Ser276. Residues Ser232, Ser233, Asn234, and Ser276 each contribute to the dimethylallyl diphosphate site. Positions 232, 233, 234, and 276 each coordinate isopentenyl diphosphate.

It belongs to the IspH family. [4Fe-4S] cluster serves as cofactor.

It carries out the reaction isopentenyl diphosphate + 2 oxidized [2Fe-2S]-[ferredoxin] + H2O = (2E)-4-hydroxy-3-methylbut-2-enyl diphosphate + 2 reduced [2Fe-2S]-[ferredoxin] + 2 H(+). The enzyme catalyses dimethylallyl diphosphate + 2 oxidized [2Fe-2S]-[ferredoxin] + H2O = (2E)-4-hydroxy-3-methylbut-2-enyl diphosphate + 2 reduced [2Fe-2S]-[ferredoxin] + 2 H(+). It functions in the pathway isoprenoid biosynthesis; dimethylallyl diphosphate biosynthesis; dimethylallyl diphosphate from (2E)-4-hydroxy-3-methylbutenyl diphosphate: step 1/1. It participates in isoprenoid biosynthesis; isopentenyl diphosphate biosynthesis via DXP pathway; isopentenyl diphosphate from 1-deoxy-D-xylulose 5-phosphate: step 6/6. Functionally, catalyzes the conversion of 1-hydroxy-2-methyl-2-(E)-butenyl 4-diphosphate (HMBPP) into a mixture of isopentenyl diphosphate (IPP) and dimethylallyl diphosphate (DMAPP). Acts in the terminal step of the DOXP/MEP pathway for isoprenoid precursor biosynthesis. This Bordetella parapertussis (strain 12822 / ATCC BAA-587 / NCTC 13253) protein is 4-hydroxy-3-methylbut-2-enyl diphosphate reductase.